The following is a 474-amino-acid chain: Cysteine--tRNA ligase (474 aa).

Cys-28 contributes to the Zn(2+) binding site. The 'HIGH' region motif lies at 30-40; it reads ITVYDLCHLGH. Zn(2+) contacts are provided by Cys-209, His-234, and Glu-238. Residues 269–273 carry the 'KMSKS' region motif; sequence KMSKS. An ATP-binding site is contributed by Lys-272.

Belongs to the class-I aminoacyl-tRNA synthetase family. As to quaternary structure, monomer. Zn(2+) is required as a cofactor.

The protein resides in the cytoplasm. It catalyses the reaction tRNA(Cys) + L-cysteine + ATP = L-cysteinyl-tRNA(Cys) + AMP + diphosphate. This is Cysteine--tRNA ligase from Blochmanniella floridana.